Here is a 937-residue protein sequence, read N- to C-terminus: Protein translocase subunit SecA (937 aa).

Residues Gln90, 108–112 (GEGKT), and Asp509 each bind ATP.

This sequence belongs to the SecA family. As to quaternary structure, monomer and homodimer. Part of the essential Sec protein translocation apparatus which comprises SecA, SecYEG and auxiliary proteins SecDF. Other proteins may also be involved.

It is found in the cell inner membrane. The protein resides in the cellular thylakoid membrane. Its subcellular location is the cytoplasm. The catalysed reaction is ATP + H2O + cellular proteinSide 1 = ADP + phosphate + cellular proteinSide 2.. Its function is as follows. Part of the Sec protein translocase complex. Interacts with the SecYEG preprotein conducting channel. Has a central role in coupling the hydrolysis of ATP to the transfer of proteins into and across the cell membrane, serving as an ATP-driven molecular motor driving the stepwise translocation of polypeptide chains across the membrane. In terms of biological role, probably participates in protein translocation into and across both the cytoplasmic and thylakoid membranes in cyanobacterial cells. This Parasynechococcus marenigrum (strain WH8102) protein is Protein translocase subunit SecA.